Here is a 149-residue protein sequence, read N- to C-terminus: MEVILKKDVDNLGFKDDLVAVKNGYGRNYLIPHGFAELATPSARKVLSETLKQRAYKEQKHIDEAKKQAEKLNNLEIKITAKAGAGDKLFGSITNGDLADALAKEGVEIEKKYISIAGGNIKRLGQYDATLRFHREVISNFSFDVVGDA.

Belongs to the bacterial ribosomal protein bL9 family.

Its function is as follows. Binds to the 23S rRNA. In Christiangramia forsetii (strain DSM 17595 / CGMCC 1.15422 / KT0803) (Gramella forsetii), this protein is Large ribosomal subunit protein bL9.